Reading from the N-terminus, the 120-residue chain is NAD(P)H-quinone oxidoreductase subunit 3, organellar chromatophore (120 aa).

The next 3 membrane-spanning stretches (helical) occupy residues 6–26 (GYDAFLGFLLIATAVPVLALL), 64–84 (MFALVFVIFDVETVFLYPWAV), and 89–109 (LGLLAFIEALIFIAILVIALA).

Belongs to the complex I subunit 3 family. NDH is composed of at least 16 different subunits, 5 of which are encoded in the nucleus.

It localises to the plastid. Its subcellular location is the organellar chromatophore thylakoid membrane. The enzyme catalyses a plastoquinone + NADH + (n+1) H(+)(in) = a plastoquinol + NAD(+) + n H(+)(out). It catalyses the reaction a plastoquinone + NADPH + (n+1) H(+)(in) = a plastoquinol + NADP(+) + n H(+)(out). In terms of biological role, NDH shuttles electrons from NAD(P)H:plastoquinone, via FMN and iron-sulfur (Fe-S) centers, to quinones in the photosynthetic chain and possibly in a chloroplast respiratory chain. The immediate electron acceptor for the enzyme in this species is believed to be plastoquinone. Couples the redox reaction to proton translocation, and thus conserves the redox energy in a proton gradient. This Paulinella chromatophora protein is NAD(P)H-quinone oxidoreductase subunit 3, organellar chromatophore.